The following is a 723-amino-acid chain: Catalase-peroxidase (723 aa).

The segment at residues 89 to 212 (WHSAGTYRTG…LAAVQMGLIY (124 aa)) is a cross-link (tryptophyl-tyrosyl-methioninium (Trp-Tyr) (with M-238)). Residue His-90 is the Proton acceptor of the active site. Positions 212-238 (YVNPEGPNGDPDPFAAAVDIRETFARM) form a cross-link, tryptophyl-tyrosyl-methioninium (Tyr-Met) (with W-89). His-253 contributes to the heme b binding site.

The protein belongs to the peroxidase family. Peroxidase/catalase subfamily. In terms of assembly, homodimer or homotetramer. The cofactor is heme b. Post-translationally, formation of the three residue Trp-Tyr-Met cross-link is important for the catalase, but not the peroxidase activity of the enzyme.

It carries out the reaction H2O2 + AH2 = A + 2 H2O. It catalyses the reaction 2 H2O2 = O2 + 2 H2O. Its function is as follows. Bifunctional enzyme with both catalase and broad-spectrum peroxidase activity. The polypeptide is Catalase-peroxidase (Shewanella baltica (strain OS185)).